A 390-amino-acid polypeptide reads, in one-letter code: Zinc transporter 7-B (390 aa).

Topologically, residues 1–37 (MLPLSIKDDEYKPPKFNLVRKVSGWIRSIFSDSTSRN) are cytoplasmic. Residues 38–58 (LFCFLCLNLSFAFVELFYGIW) traverse the membrane as a helical segment. Residues 59-67 (SNSLGLISD) lie on the Lumenal side of the membrane. Residues 68-88 (SFHMFFDCTALLAGLAASVIS) form a helical membrane-spanning segment. Topologically, residues 89-102 (RWKTNETFSYGYVR) are cytoplasmic. The chain crosses the membrane as a helical span at residues 103–123 (AEVLAGFVNGLFLIFTAFFIF). The Lumenal segment spans residues 124–140 (SEGIERALDTPEVHHER). A helical transmembrane segment spans residues 141 to 161 (LLPVSIMGFLVNLIGIFVFQH). A his-rich loop region spans residues 161–226 (HGGGHGHSHE…GHDHSHKHGH (66 aa)). Residues 162 to 250 (GGGHGHSHES…KGSSKQILEG (89 aa)) are Cytoplasmic-facing. Residues 166–243 (GHSHESGHGH…DEPPEENKGS (78 aa)) form a disordered region. Positions 187–201 (GHSHSHGGGHGHSHG) are enriched in basic residues. Basic and acidic residues-rich tracts occupy residues 202–218 (GGHE…EHGH) and 232–242 (CHDEPPEENKG). The helical transmembrane segment at 251-271 (VFLHIVADALGSVGVIISTIL) threads the bilayer. At 272 to 276 (MQQYG) the chain is on the lumenal side. A helical membrane pass occupies residues 277-297 (LMIADPICSMLIALLIFVSVI). Topologically, residues 298 to 390 (PLLKQSIGIL…LYVQIDLAAM (93 aa)) are cytoplasmic.

This sequence belongs to the cation diffusion facilitator (CDF) transporter (TC 2.A.4) family. SLC30A subfamily. Homooligomer.

The protein resides in the golgi apparatus membrane. It is found in the cytoplasmic vesicle. Its subcellular location is the golgi apparatus. The protein localises to the trans-Golgi network. It localises to the sarcoplasmic reticulum. The protein resides in the mitochondrion. It carries out the reaction Zn(2+)(in) = Zn(2+)(out). In terms of biological role, zinc ion transporter mediating zinc entry from the cytosol into the lumen of organelles along the secretory pathway. By contributing to zinc ion homeostasis within the early secretory pathway, regulates the activation and folding of enzymes like alkaline phosphatases. The sequence is that of Zinc transporter 7-B (slc30a7-b) from Xenopus laevis (African clawed frog).